The following is an 804-amino-acid chain: Exo-1,4-beta-xylosidase xlnD (804 aa).

An N-terminal signal peptide occupies residues 1–26; it reads MAHSMSRPVAATAAALLALALPQALA. 5 N-linked (GlcNAc...) asparagine glycosylation sites follow: asparagine 29, asparagine 124, asparagine 148, asparagine 242, and asparagine 251. The active site involves aspartate 315. 9 N-linked (GlcNAc...) asparagine glycosylation sites follow: asparagine 357, asparagine 390, asparagine 413, asparagine 444, asparagine 455, asparagine 573, asparagine 665, asparagine 696, and asparagine 718.

The protein belongs to the glycosyl hydrolase 3 family.

It localises to the secreted. It carries out the reaction Hydrolysis of (1-&gt;4)-beta-D-xylans, to remove successive D-xylose residues from the non-reducing termini.. The protein operates within glycan degradation; xylan degradation. Xylan 1,4-beta-xylosidase involved in the hydrolysis of xylan, a major structural heterogeneous polysaccharide found in plant biomass representing the second most abundant polysaccharide in the biosphere, after cellulose. This Aspergillus awamori (Black koji mold) protein is Exo-1,4-beta-xylosidase xlnD (xlnD).